The sequence spans 232 residues: Orotidine 5'-phosphate decarboxylase (232 aa).

Substrate-binding positions include Asp-11, Lys-33, 60 to 69, Thr-120, Arg-181, Gln-191, Gly-211, and Arg-212; that span reads DLKFHDIPTT. The active-site Proton donor is Lys-62.

Belongs to the OMP decarboxylase family. Type 1 subfamily. As to quaternary structure, homodimer.

The catalysed reaction is orotidine 5'-phosphate + H(+) = UMP + CO2. The protein operates within pyrimidine metabolism; UMP biosynthesis via de novo pathway; UMP from orotate: step 2/2. Functionally, catalyzes the decarboxylation of orotidine 5'-monophosphate (OMP) to uridine 5'-monophosphate (UMP). The chain is Orotidine 5'-phosphate decarboxylase from Tolumonas auensis (strain DSM 9187 / NBRC 110442 / TA 4).